We begin with the raw amino-acid sequence, 203 residues long: UPF0637 protein SERP0693 (203 aa).

The protein belongs to the UPF0637 family.

This Staphylococcus epidermidis (strain ATCC 35984 / DSM 28319 / BCRC 17069 / CCUG 31568 / BM 3577 / RP62A) protein is UPF0637 protein SERP0693.